A 237-amino-acid polypeptide reads, in one-letter code: Urease subunit alpha (237 aa).

A urease gamma region spans residues 1 to 102; that stretch reads MKLTPKELDK…LVTIHTPVED (102 aa). The segment at 103–237 is urease beta; sequence NGKLAPGEVF…CGCEATKDKQ (135 aa).

In the N-terminal section; belongs to the urease gamma subunit family. The protein in the C-terminal section; belongs to the urease beta subunit family. Heterohexamer of 3 UreA (alpha) and 3 UreB (beta) subunits.

Its subcellular location is the cytoplasm. The catalysed reaction is urea + 2 H2O + H(+) = hydrogencarbonate + 2 NH4(+). It functions in the pathway nitrogen metabolism; urea degradation; CO(2) and NH(3) from urea (urease route): step 1/1. In Helicobacter felis, this protein is Urease subunit alpha.